Reading from the N-terminus, the 198-residue chain is Prostamide/prostaglandin F synthase (198 aa).

The residue at position 108 (Tyr-108) is a Phosphotyrosine.

It belongs to the peroxiredoxin-like PRXL2 family. Prostamide/prostaglandin F synthase subfamily.

The protein localises to the cytoplasm. Its subcellular location is the cytosol. It catalyses the reaction prostaglandin H2 + [thioredoxin]-dithiol = prostaglandin F2alpha + [thioredoxin]-disulfide. The catalysed reaction is prostamide F2alpha + [thioredoxin]-disulfide = prostamide H2 + [thioredoxin]-dithiol. Catalyzes the reduction of prostaglandin-ethanolamide H(2) (prostamide H(2)) to prostamide F(2alpha) with NADPH as proton donor. Also able to reduce prostaglandin H(2) to prostaglandin F(2alpha). The chain is Prostamide/prostaglandin F synthase (PRXL2B) from Pongo abelii (Sumatran orangutan).